The chain runs to 155 residues: Protein SprT-like (155 aa).

Positions 7-145 (QRHMEEVSLQ…GSCGGKLIQT (139 aa)) constitute a SprT-like domain. Residue histidine 67 participates in Zn(2+) binding. Glutamate 68 is an active-site residue. Histidine 71 provides a ligand contact to Zn(2+).

The protein belongs to the SprT family. Zn(2+) serves as cofactor.

The protein localises to the cytoplasm. The chain is Protein SprT-like from Listeria monocytogenes serovar 1/2a (strain ATCC BAA-679 / EGD-e).